Consider the following 420-residue polypeptide: L-cysteine:1D-myo-inositol 2-amino-2-deoxy-alpha-D-glucopyranoside ligase (420 aa).

Cys43 contacts Zn(2+). Residues 43-46 (CGIT), Thr58, and 81-83 (NIT) each bind L-cysteinyl-5'-AMP. The 'HIGH' region signature appears at 45-55 (ITPYDATHLGH). Residues 187 to 192 (ERGGDP) carry the 'ERGGDP' region motif. Position 227 (Trp227) interacts with L-cysteinyl-5'-AMP. Cys231 lines the Zn(2+) pocket. 249-251 (GSD) contributes to the L-cysteinyl-5'-AMP binding site. His256 lines the Zn(2+) pocket. Residue Ile289 participates in L-cysteinyl-5'-AMP binding. Positions 295–299 (KMSKS) match the 'KMSKS' region motif.

The protein belongs to the class-I aminoacyl-tRNA synthetase family. MshC subfamily. Monomer. Zn(2+) is required as a cofactor.

The enzyme catalyses 1D-myo-inositol 2-amino-2-deoxy-alpha-D-glucopyranoside + L-cysteine + ATP = 1D-myo-inositol 2-(L-cysteinylamino)-2-deoxy-alpha-D-glucopyranoside + AMP + diphosphate + H(+). In terms of biological role, catalyzes the ATP-dependent condensation of GlcN-Ins and L-cysteine to form L-Cys-GlcN-Ins. This Segniliparus rotundus (strain ATCC BAA-972 / CDC 1076 / CIP 108378 / DSM 44985 / JCM 13578) protein is L-cysteine:1D-myo-inositol 2-amino-2-deoxy-alpha-D-glucopyranoside ligase.